A 296-amino-acid chain; its full sequence is Tyrosine recombinase XerC (296 aa).

In terms of domain architecture, Core-binding (CB) spans 2–85; that stretch reads ADQASWLERF…ALKQFGQFLL (84 aa). In terms of domain architecture, Tyr recombinase spans 106-285; that stretch reads TLPKNLDPDS…DFQHLAKVYD (180 aa). Residues Arg-145, Lys-169, His-237, Arg-240, and His-263 contribute to the active site. Tyr-272 (O-(3'-phospho-DNA)-tyrosine intermediate) is an active-site residue.

It belongs to the 'phage' integrase family. XerC subfamily. Forms a cyclic heterotetrameric complex composed of two molecules of XerC and two molecules of XerD.

It is found in the cytoplasm. Functionally, site-specific tyrosine recombinase, which acts by catalyzing the cutting and rejoining of the recombining DNA molecules. The XerC-XerD complex is essential to convert dimers of the bacterial chromosome into monomers to permit their segregation at cell division. It also contributes to the segregational stability of plasmids. This Shewanella amazonensis (strain ATCC BAA-1098 / SB2B) protein is Tyrosine recombinase XerC.